The chain runs to 158 residues: Ribosome-binding factor A (158 aa).

The disordered stretch occupies residues 130 to 158 (TAQYAGDADPYKHDDEAEAEGDEFESDEE). The span at 145-158 (EAEAEGDEFESDEE) shows a compositional bias: acidic residues.

The protein belongs to the RbfA family. Monomer. Binds 30S ribosomal subunits, but not 50S ribosomal subunits or 70S ribosomes.

The protein resides in the cytoplasm. In terms of biological role, one of several proteins that assist in the late maturation steps of the functional core of the 30S ribosomal subunit. Associates with free 30S ribosomal subunits (but not with 30S subunits that are part of 70S ribosomes or polysomes). Required for efficient processing of 16S rRNA. May interact with the 5'-terminal helix region of 16S rRNA. The sequence is that of Ribosome-binding factor A from Bifidobacterium longum subsp. infantis (strain ATCC 15697 / DSM 20088 / JCM 1222 / NCTC 11817 / S12).